The sequence spans 523 residues: GMP synthase [glutamine-hydrolyzing] (523 aa).

The Glutamine amidotransferase type-1 domain maps to 8–205 (KILILDFGSQ…VVGICGCECK (198 aa)). C85 acts as the Nucleophile in catalysis. Active-site residues include H179 and E181. Residues 206-398 (WTAENIIEDA…LGLPAEMLNR (193 aa)) enclose the GMPS ATP-PPase domain. Residue 233 to 239 (SGGVDSS) participates in ATP binding.

Homodimer.

The enzyme catalyses XMP + L-glutamine + ATP + H2O = GMP + L-glutamate + AMP + diphosphate + 2 H(+). It functions in the pathway purine metabolism; GMP biosynthesis; GMP from XMP (L-Gln route): step 1/1. In terms of biological role, catalyzes the synthesis of GMP from XMP. This is GMP synthase [glutamine-hydrolyzing] from Actinobacillus pleuropneumoniae serotype 3 (strain JL03).